The following is a 311-amino-acid chain: Cbb3-type cytochrome c oxidase subunit CcoP1 (311 aa).

2 helical membrane-spanning segments follow: residues 4–24 and 56–76; these read FWSG…FWLI and RWWF…LVLY. 2 Cytochrome c domains span residues 130–209 and 220–302; these read QAVK…RKDL and ADLS…YSLS. Residues cysteine 143, cysteine 146, histidine 147, methionine 186, cysteine 233, cysteine 236, histidine 237, and methionine 279 each contribute to the heme c site.

It belongs to the CcoP / FixP family. In terms of assembly, component of the cbb3-type cytochrome c oxidase at least composed of CcoN, CcoO, CcoQ and CcoP. Requires heme c as cofactor.

It localises to the cell inner membrane. It functions in the pathway energy metabolism; oxidative phosphorylation. Its function is as follows. C-type cytochrome. Part of the cbb3-type cytochrome c oxidase complex. CcoP subunit is required for transferring electrons from donor cytochrome c via its heme groups to CcoO subunit. From there, electrons are shuttled to the catalytic binuclear center of CcoN subunit where oxygen reduction takes place. The complex also functions as a proton pump. This is Cbb3-type cytochrome c oxidase subunit CcoP1 from Stutzerimonas stutzeri (Pseudomonas stutzeri).